The sequence spans 402 residues: Major outer membrane porin (402 aa).

A signal peptide spans 1–22 (MKKLLKSALLFAATGSALSLQA).

It belongs to the chlamydial porin (CP) (TC 1.B.2) family. As to quaternary structure, part of a disulfide cross-linked outer membrane complex (COMC) composed of the major outer membrane porin, the small cysteine-rich protein (OmcA) and the large cysteine-rich periplasmic protein (OmcB).

Its subcellular location is the cell outer membrane. Functionally, in elementary bodies (EBs, the infectious stage, which is able to survive outside the host cell) provides the structural integrity of the outer envelope through disulfide cross-links with the small cysteine-rich protein and the large cysteine-rich periplasmic protein. It has been described in publications as the Sarkosyl-insoluble COMC (Chlamydia outer membrane complex), and serves as the functional equivalent of peptidoglycan. In terms of biological role, permits diffusion of specific solutes through the outer membrane. The chain is Major outer membrane porin (ompA) from Chlamydia psittaci (Chlamydophila psittaci).